The following is a 188-amino-acid chain: Elongation factor P (188 aa).

The protein belongs to the elongation factor P family.

Its subcellular location is the cytoplasm. The protein operates within protein biosynthesis; polypeptide chain elongation. Involved in peptide bond synthesis. Stimulates efficient translation and peptide-bond synthesis on native or reconstituted 70S ribosomes in vitro. Probably functions indirectly by altering the affinity of the ribosome for aminoacyl-tRNA, thus increasing their reactivity as acceptors for peptidyl transferase. This is Elongation factor P from Caulobacter sp. (strain K31).